The following is a 104-amino-acid chain: Translation initiation factor 1A (104 aa).

Residues 1-14 (MRGQQTPPQQPTRV) show a composition bias toward low complexity. Residues 1–20 (MRGQQTPPQQPTRVRTPREN) form a disordered region. The region spanning 12–87 (TRVRTPRENE…EKCDVIWRYT (76 aa)) is the S1-like domain.

This sequence belongs to the eIF-1A family.

Functionally, seems to be required for maximal rate of protein biosynthesis. Enhances ribosome dissociation into subunits and stabilizes the binding of the initiator Met-tRNA(I) to 40 S ribosomal subunits. In Methanococcus maripaludis (strain DSM 14266 / JCM 13030 / NBRC 101832 / S2 / LL), this protein is Translation initiation factor 1A.